A 230-amino-acid polypeptide reads, in one-letter code: ATP phosphoribosyltransferase (230 aa).

Belongs to the ATP phosphoribosyltransferase family. Short subfamily. Heteromultimer composed of HisG and HisZ subunits.

The protein resides in the cytoplasm. The catalysed reaction is 1-(5-phospho-beta-D-ribosyl)-ATP + diphosphate = 5-phospho-alpha-D-ribose 1-diphosphate + ATP. Its pathway is amino-acid biosynthesis; L-histidine biosynthesis; L-histidine from 5-phospho-alpha-D-ribose 1-diphosphate: step 1/9. Functionally, catalyzes the condensation of ATP and 5-phosphoribose 1-diphosphate to form N'-(5'-phosphoribosyl)-ATP (PR-ATP). Has a crucial role in the pathway because the rate of histidine biosynthesis seems to be controlled primarily by regulation of HisG enzymatic activity. The chain is ATP phosphoribosyltransferase from Agrobacterium fabrum (strain C58 / ATCC 33970) (Agrobacterium tumefaciens (strain C58)).